A 216-amino-acid polypeptide reads, in one-letter code: Probable GTP-binding protein EngB (216 aa).

Positions 37 to 214 (DGLEVAFAGR…RAAMIRLLDE (178 aa)) constitute an EngB-type G domain. GTP contacts are provided by residues 45-52 (GRSNVGKS), 72-76 (GRTQE), 92-95 (DMPG), 159-162 (TKAD), and 193-195 (TSS). 2 residues coordinate Mg(2+): serine 52 and threonine 74.

The protein belongs to the TRAFAC class TrmE-Era-EngA-EngB-Septin-like GTPase superfamily. EngB GTPase family. Mg(2+) is required as a cofactor.

Its function is as follows. Necessary for normal cell division and for the maintenance of normal septation. In Rhodopseudomonas palustris (strain HaA2), this protein is Probable GTP-binding protein EngB.